A 283-amino-acid polypeptide reads, in one-letter code: Ribonuclease P protein subunit p38 (283 aa).

A2 carries the N-acetylalanine modification. Phosphoserine is present on residues S12, S226, and S235.

Belongs to the eukaryotic ribosomal protein eL8 family. Component of nuclear RNase P and RNase MRP ribonucleoproteins. RNase P consists of a catalytic RNA moiety and about 10 protein subunits; POP1, POP4, POP5, POP7, RPP14, RPP21, RPP25, RPP30, RPP38 and RPP40. Within the RNase P complex, POP1, POP7 and RPP25 form the 'finger' subcomplex, POP5, RPP14, RPP40 and homodimeric RPP30 form the 'palm' subcomplex, and RPP21, POP4 and RPP38 form the 'wrist' subcomplex. All subunits of the RNase P complex interact with the catalytic RNA. Several subunits of RNase P are also part of the RNase MRP complex. RNase MRP consists of a catalytic RNA moiety and about 8 protein subunits; POP1, POP7, RPP25, RPP30, RPP38, RPP40 and possibly also POP4 and POP5.

Its subcellular location is the nucleus. It is found in the nucleolus. Functionally, component of ribonuclease P, a ribonucleoprotein complex that generates mature tRNA molecules by cleaving their 5'-ends. Also a component of the MRP ribonuclease complex, which cleaves pre-rRNA sequences. The chain is Ribonuclease P protein subunit p38 (RPP38) from Homo sapiens (Human).